The following is an 875-amino-acid chain: Probable inorganic carbon transporter subunit DabA (875 aa).

4 residues coordinate Zn(2+): Cys-380, Asp-382, His-563, and Cys-578.

Belongs to the inorganic carbon transporter (TC 9.A.2) DabA family. In terms of assembly, forms a complex with DabB. Requires Zn(2+) as cofactor.

The protein resides in the cell membrane. Functionally, part of an energy-coupled inorganic carbon pump. The polypeptide is Probable inorganic carbon transporter subunit DabA (Geobacillus thermodenitrificans (strain NG80-2)).